The sequence spans 703 residues: Polyribonucleotide nucleotidyltransferase (703 aa).

Positions 488 and 494 each coordinate Mg(2+). The KH domain maps to Pro555–Ile614. The region spanning Gly624–Lys692 is the S1 motif domain.

It belongs to the polyribonucleotide nucleotidyltransferase family. Mg(2+) is required as a cofactor.

Its subcellular location is the cytoplasm. The enzyme catalyses RNA(n+1) + phosphate = RNA(n) + a ribonucleoside 5'-diphosphate. Involved in mRNA degradation. Catalyzes the phosphorolysis of single-stranded polyribonucleotides processively in the 3'- to 5'-direction. This Polaromonas naphthalenivorans (strain CJ2) protein is Polyribonucleotide nucleotidyltransferase.